Reading from the N-terminus, the 306-residue chain is Non-specific ribonucleoside hydrolase RihC (306 aa).

H235 is a catalytic residue.

It belongs to the IUNH family. RihC subfamily.

Functionally, hydrolyzes both purine and pyrimidine ribonucleosides with a broad-substrate specificity. This chain is Non-specific ribonucleoside hydrolase RihC, found in Salmonella schwarzengrund (strain CVM19633).